A 191-amino-acid chain; its full sequence is Guanylate kinase (191 aa).

In terms of domain architecture, Guanylate kinase-like spans 8–188 (GRLVVLAGPS…AVSDIKEILV (181 aa)). An ATP-binding site is contributed by 15-22 (GPSAVGKS).

The protein belongs to the guanylate kinase family.

It localises to the cytoplasm. The catalysed reaction is GMP + ATP = GDP + ADP. Essential for recycling GMP and indirectly, cGMP. The polypeptide is Guanylate kinase (Corynebacterium diphtheriae (strain ATCC 700971 / NCTC 13129 / Biotype gravis)).